Here is a 60-residue protein sequence, read N- to C-terminus: Hemocyte defensin Cg-Defh2 (60 aa).

The signal sequence occupies residues 1 to 17; the sequence is LLTLAVLLMVSADMAFA. The beta-D-GlcNAc-(1-&gt;4)-Mur2Ac(oyl-L-Ala-gamma-D-Glu-L-Lys-D-Ala-D-Ala)-di-trans,octa-cis-undecaprenyl diphosphate site is built by Phe19, Gly20, and Cys21. Disulfide bonds link Cys21–Cys42, Cys28–Cys51, Cys32–Cys53, and Cys37–Cys56. Residues 22-25 form a binds to membrane interface region; that stretch reads PGDQ. Residue His31 coordinates beta-D-GlcNAc-(1-&gt;4)-Mur2Ac(oyl-L-Ala-gamma-D-Glu-L-Lys-D-Ala-D-Ala)-di-trans,octa-cis-undecaprenyl diphosphate. The segment at 43-49 is binds to membrane interface; the sequence is DAVTLWL. Cys51 is a binding site for beta-D-GlcNAc-(1-&gt;4)-Mur2Ac(oyl-L-Ala-gamma-D-Glu-L-Lys-D-Ala-D-Ala)-di-trans,octa-cis-undecaprenyl diphosphate.

It belongs to the invertebrate defensin family. In terms of tissue distribution, expressed in hemocytes.

The protein resides in the secreted. It is found in the target cell membrane. Its function is as follows. Antibacterial peptide mostly active against Gram-positive bacteria. It acts by selectively inhibiting peptidoglycan biosynthesis through complex formation with the cell wall precursor lipid II (1:1 molar ratio) thus inhibiting cell wall synthesis. It does not disrupt cell membranes. Is noticeably more potent than Cg-Defh1. This is Hemocyte defensin Cg-Defh2 from Magallana gigas (Pacific oyster).